Consider the following 952-residue polypeptide: Protocadherin-20 (952 aa).

Positions 1–60 (MRGRGNARSLLVQAVSLRPATWHPCLDMGHLHRPSSRTSHRNLPHVFLLFLFVGPFNCLA) are cleaved as a signal peptide. Topologically, residues 61-891 (SYSRATELLY…VESMSCMPTL (831 aa)) are extracellular. Cadherin domains lie at 64-210 (RATE…APQF), 211-321 (PISE…CPLF), 322-536 (IDSQ…APVF), 537-640 (LQPL…SPRF), 641-743 (INKD…PPLV), and 747-864 (QSNM…EPEI). N-linked (GlcNAc...) asparagine glycosylation is present at asparagine 135. Residues asparagine 327 and asparagine 333 are each glycosylated (N-linked (GlcNAc...) asparagine). N-linked (GlcNAc...) asparagine glycosylation is found at asparagine 681, asparagine 749, asparagine 804, asparagine 845, and asparagine 850. The helical transmembrane segment at 892–912 (VALSVISLGSITLVTGMGIYI) threads the bilayer. Topologically, residues 913 to 952 (CLRKGKKHHREDDNLEVQIPLKGKIDLCMRERKPVDISNI) are cytoplasmic.

The protein resides in the cell membrane. In terms of biological role, potential calcium-dependent cell-adhesion protein. In Mus musculus (Mouse), this protein is Protocadherin-20 (Pcdh20).